The primary structure comprises 297 residues: Probable GTP 3',8-cyclase (297 aa).

In terms of domain architecture, Radical SAM core spans 4-220 (EFGREIRSFR…VVTRKFMQNR (217 aa)). R13 provides a ligand contact to GTP. Residues C20 and C24 each contribute to the [4Fe-4S] cluster site. Y26 is an S-adenosyl-L-methionine binding site. C27 serves as a coordination point for [4Fe-4S] cluster. K61 provides a ligand contact to GTP. Residue G65 coordinates S-adenosyl-L-methionine. T91 is a binding site for GTP. S115 contributes to the S-adenosyl-L-methionine binding site. Position 151 (K151) interacts with GTP. Residues C242 and C245 each coordinate [4Fe-4S] cluster. 247–249 (RIR) provides a ligand contact to GTP. A [4Fe-4S] cluster-binding site is contributed by C259.

The protein belongs to the radical SAM superfamily. MoaA family. Requires [4Fe-4S] cluster as cofactor.

The enzyme catalyses GTP + AH2 + S-adenosyl-L-methionine = (8S)-3',8-cyclo-7,8-dihydroguanosine 5'-triphosphate + 5'-deoxyadenosine + L-methionine + A + H(+). It functions in the pathway cofactor biosynthesis; molybdopterin biosynthesis. In terms of biological role, catalyzes the cyclization of GTP to (8S)-3',8-cyclo-7,8-dihydroguanosine 5'-triphosphate. The chain is Probable GTP 3',8-cyclase from Methanococcus vannielii (strain ATCC 35089 / DSM 1224 / JCM 13029 / OCM 148 / SB).